Reading from the N-terminus, the 742-residue chain is Dynein axonemal intermediate chain 4 (742 aa).

WD repeat units follow at residues 462–502 (HCEC…DFPV), 511–559 (KHTS…DCND), 631–671 (GHKG…PILT), and 674–713 (NTTN…IDPV).

Part of the multisubunit axonemal dynein complex formed at least of two heavy chains and a number of intermediate and light chains. Associated with axonemal dynein subunits such as, DNAH2, DNAI3, and DYNLT1.

Its subcellular location is the cytoplasm. The protein resides in the cytoskeleton. It is found in the flagellum axoneme. The protein localises to the cilium axoneme. It localises to the dynein axonemal particle. Its function is as follows. Plays a critical role in the assembly of axonemal dynein complex, thereby playing a role in ciliary motility. The sequence is that of Dynein axonemal intermediate chain 4 from Xenopus laevis (African clawed frog).